The chain runs to 709 residues: Nucleobase-ascorbate transporter 12 (709 aa).

The disordered stretch occupies residues 1-145 (MSSSDPKPGP…GSGDPVRRPG (145 aa)). Positions 7–19 (KPGPKPGPWPPTP) are enriched in pro residues. Ser-40 is modified (phosphoserine). Residues 41 to 53 (GETTATDSSSGQL) are compositionally biased toward polar residues. 2 stretches are compositionally biased toward basic and acidic residues: residues 89–98 (ETDKDKKEKP) and 113–122 (QPVKRRRDSD). The next 12 membrane-spanning stretches (helical) occupy residues 190 to 210 (YLSM…AMGG), 218 to 238 (VVST…SFGS), 240 to 260 (LPLI…IINS), 283 to 303 (IIIG…SLIL), 308 to 328 (PVVV…YGFP), 329 to 349 (LVGK…IFAL), 361 to 381 (IFLI…AFLL), 438 to 458 (WGVP…SVIA), 530 to 550 (GACV…LASI), 551 to 571 (PQVM…ALGL), 585 to 605 (IIIV…FQQY), and 639 to 659 (YVMN…AVIL).

Belongs to the nucleobase:cation symporter-2 (NCS2) (TC 2.A.40) family. Ubiquitous.

The protein localises to the cell membrane. The polypeptide is Nucleobase-ascorbate transporter 12 (NAT12) (Arabidopsis thaliana (Mouse-ear cress)).